The primary structure comprises 1021 residues: MTERAAAAPRGPYGAWLCLLVALALEVVRVGSNQNTLDPIYLPVALELLDAPEHFRVQQVGHYPPANSSLGSRSETFLLMQPWPRAQPLLRASYPPFATQQVVPPRVTEPHRRPVPWDVRAVSVEAAVTPAEPYARVLFHLKGQDWPPGPGSLPCARLHATHPAGTAHQACRFQPSLGACVVELQFPSQWFSQSATTRAELAYTLEPAGEGPGGCGPGTEEEPKEQALPVGSVELHPEDPPQHQEVPLDEVVTLRAPDVPVRPGQLFTATLLLRHNFTASLLTLRIKVKKGLQVTAARPAQPTFWTAKLDRFKGSKHHTSLITCHRTGPAGPDSRPLELPEFLWVDFAVENSTGGGVAVTRPVTWQLEYPGQAPEAEKDKMVWEILFSERDIRALIPLAKAEELVNTAPLTGVPQRIPVRLVTVDSGGALEEVTEHIGCESANTQVLQVSEACDAVFVAGQESRGAKGVRVDFWWRRLRASLKLTVWAPLLPLRIELTDTTLEQIRGWRVPGPAEGQLEPEAAAEEVERRSRGCRLQYQRAGVRFLVPFAAHPLDGGRRLTHLLGPDWLLDVSHLVAAHAHVQDPRIATLEGGRILVGREPGVTSIEVRSPLSDSILGEQALAVTDDKVSVLDLRVQPVMGISLSLSRGVSHPGEVTATCWAQSALPAPKQEVALSLWLSFSDHTLAPAELYDRNDLGLSVSAEEPSAVVPAEEQRAQLGVVVSGVGAKGLPLHVALHPPEPCRRGRHRVPLASGTAWLGLPPLPTPAPALPSSPARTPPFTEASVEGKRQVAGDMGSHVGPGIRGKFERAEEEAGKEENEAKEEEEDEEEMVPAPQRVTDLELGMYALLGIFCLAFLIFLVNGVVFVLRYQRKEPPDSVTDPASPQPHNWVWLGTNQEELSRQLDRCSSSSPPKGEGGCPCESGAGGDTSTVAPSASESPAGSTSTLARKEAGGRRKRVEFVTFAPAPPAQEAPEEPVGAPAVQSILVAGEEDIRWVCEDMGLKDPEELRNYMERIRGSS.

The signal sequence occupies residues 1–32; it reads MTERAAAAPRGPYGAWLCLLVALALEVVRVGS. Topologically, residues 33–848 are extracellular; sequence NQNTLDPIYL…VTDLELGMYA (816 aa). Residues 207-226 form a disordered region; it reads PAGEGPGGCGPGTEEEPKEQ. Asn276 carries N-linked (GlcNAc...) asparagine glycosylation. Positions 606–913 are binds to HSPA5/GRP78; that stretch reads IEVRSPLSDS…QLDRCSSSSP (308 aa). The confers cellular localization similar to full-length form stretch occupies residues 666–1021; it reads LPAPKQEVAL…NYMERIRGSS (356 aa). Residues 793–835 form a disordered region; that stretch reads AGDMGSHVGPGIRGKFERAEEEAGKEENEAKEEEEDEEEMVPA. Positions 806 to 820 are enriched in basic and acidic residues; sequence GKFERAEEEAGKEEN. Residues 821 to 832 show a composition bias toward acidic residues; that stretch reads EAKEEEEDEEEM. The chain crosses the membrane as a helical span at residues 849-869; that stretch reads LLGIFCLAFLIFLVNGVVFVL. Residues 870–1021 are Cytoplasmic-facing; it reads RYQRKEPPDS…NYMERIRGSS (152 aa). Residues 903-955 form a disordered region; sequence RQLDRCSSSSPPKGEGGCPCESGAGGDTSTVAPSASESPAGSTSTLARKEAGG. Positions 929-948 are enriched in polar residues; that stretch reads DTSTVAPSASESPAGSTSTL.

The protein belongs to the TMEM132 family. As to quaternary structure, interacts with HSPA5/GRP78. In terms of tissue distribution, expressed in the brain in neuronal cells of the hypothalamus, thalamus, cerebral cortex, amygdala, and cerebellum.

The protein localises to the golgi apparatus membrane. It is found in the endoplasmic reticulum membrane. Functionally, may play a role in embryonic and postnatal development of the brain. Increased resistance to cell death induced by serum starvation in cultured cells. Regulates cAMP-induced GFAP gene expression via STAT3 phosphorylation. The chain is Transmembrane protein 132A (Tmem132a) from Rattus norvegicus (Rat).